Consider the following 394-residue polypeptide: Mannosyl-3-phosphoglycerate synthase (394 aa).

This sequence belongs to the glycosyltransferase 2 family.

It localises to the cytoplasm. The enzyme catalyses (2R)-3-phosphoglycerate + GDP-alpha-D-mannose = 2-O-(alpha-D-mannosyl)-3-phosphoglycerate + GDP + H(+). The protein operates within carbohydrate biosynthesis; 2-(alpha-D-mannosyl)-D-glycerate biosynthesis; 2-(alpha-D-mannosyl)-D-glycerate from GDP-alpha-D-mannose (MPG route): step 1/2. In terms of biological role, transfers a mannosyl group from GDP-mannose to phosphoglycerate to form mannosyl-3-phosphoglycerate (MPG). In Pyrococcus abyssi (strain GE5 / Orsay), this protein is Mannosyl-3-phosphoglycerate synthase (mngA).